Reading from the N-terminus, the 386-residue chain is Queuine tRNA-ribosyltransferase (386 aa).

Catalysis depends on Asp99, which acts as the Proton acceptor. Substrate is bound by residues 99–103, Asp153, Gln198, and Gly225; that span reads DSGGF. Residues 256-262 are RNA binding; that stretch reads GVGKPED. Asp275 serves as the catalytic Nucleophile. An RNA binding; important for wobble base 34 recognition region spans residues 280-284; that stretch reads TRNAR. Zn(2+) contacts are provided by Cys313, Cys315, Cys318, and His344.

It belongs to the queuine tRNA-ribosyltransferase family. Homodimer. Within each dimer, one monomer is responsible for RNA recognition and catalysis, while the other monomer binds to the replacement base PreQ1. Requires Zn(2+) as cofactor.

It carries out the reaction 7-aminomethyl-7-carbaguanine + guanosine(34) in tRNA = 7-aminomethyl-7-carbaguanosine(34) in tRNA + guanine. Its pathway is tRNA modification; tRNA-queuosine biosynthesis. Functionally, catalyzes the base-exchange of a guanine (G) residue with the queuine precursor 7-aminomethyl-7-deazaguanine (PreQ1) at position 34 (anticodon wobble position) in tRNAs with GU(N) anticodons (tRNA-Asp, -Asn, -His and -Tyr). Catalysis occurs through a double-displacement mechanism. The nucleophile active site attacks the C1' of nucleotide 34 to detach the guanine base from the RNA, forming a covalent enzyme-RNA intermediate. The proton acceptor active site deprotonates the incoming PreQ1, allowing a nucleophilic attack on the C1' of the ribose to form the product. After dissociation, two additional enzymatic reactions on the tRNA convert PreQ1 to queuine (Q), resulting in the hypermodified nucleoside queuosine (7-(((4,5-cis-dihydroxy-2-cyclopenten-1-yl)amino)methyl)-7-deazaguanosine). The protein is Queuine tRNA-ribosyltransferase of Acinetobacter baylyi (strain ATCC 33305 / BD413 / ADP1).